The primary structure comprises 259 residues: Imidazole glycerol phosphate synthase subunit HisF (259 aa).

Residues Asp11 and Asp130 contribute to the active site.

It belongs to the HisA/HisF family. In terms of assembly, heterodimer of HisH and HisF.

Its subcellular location is the cytoplasm. It carries out the reaction 5-[(5-phospho-1-deoxy-D-ribulos-1-ylimino)methylamino]-1-(5-phospho-beta-D-ribosyl)imidazole-4-carboxamide + L-glutamine = D-erythro-1-(imidazol-4-yl)glycerol 3-phosphate + 5-amino-1-(5-phospho-beta-D-ribosyl)imidazole-4-carboxamide + L-glutamate + H(+). Its pathway is amino-acid biosynthesis; L-histidine biosynthesis; L-histidine from 5-phospho-alpha-D-ribose 1-diphosphate: step 5/9. IGPS catalyzes the conversion of PRFAR and glutamine to IGP, AICAR and glutamate. The HisF subunit catalyzes the cyclization activity that produces IGP and AICAR from PRFAR using the ammonia provided by the HisH subunit. In Lactococcus lactis subsp. cremoris (strain MG1363), this protein is Imidazole glycerol phosphate synthase subunit HisF.